A 123-amino-acid chain; its full sequence is Small ribosomal subunit protein uS12cz/uS12cy (123 aa).

It belongs to the universal ribosomal protein uS12 family. In terms of assembly, part of the 30S ribosomal subunit.

Its subcellular location is the plastid. It localises to the chloroplast. In terms of biological role, with S4 and S5 plays an important role in translational accuracy. Located at the interface of the 30S and 50S subunits. This chain is Small ribosomal subunit protein uS12cz/uS12cy (rps12-A), found in Platanus occidentalis (Sycamore).